A 343-amino-acid chain; its full sequence is NADH-quinone oxidoreductase subunit H (343 aa).

A run of 8 helical transmembrane segments spans residues 21–41 (WTLVWTILKIAVLIAPILFCV), 95–115 (FILAPILTFSTALVSWAVVPF), 124–144 (VNVGVLFILAMSSLGAYGVLL), 172–192 (MGFTLVPVIMLSGSLNLGDIV), 197–217 (GLWYALPLLPGFFIYFISVVA), 257–277 (IIMVSVLGSLMFLGGWLPPIE), 281–301 (FIPGIVWLILKTGVLIFFFLW), and 317–337 (LGWKVFLPISLAWIFIVGLAM).

This sequence belongs to the complex I subunit 1 family. As to quaternary structure, NDH-1 is composed of 14 different subunits. Subunits NuoA, H, J, K, L, M, N constitute the membrane sector of the complex.

The protein resides in the cell inner membrane. The catalysed reaction is a quinone + NADH + 5 H(+)(in) = a quinol + NAD(+) + 4 H(+)(out). Its function is as follows. NDH-1 shuttles electrons from NADH, via FMN and iron-sulfur (Fe-S) centers, to quinones in the respiratory chain. The immediate electron acceptor for the enzyme in this species is believed to be ubiquinone. Couples the redox reaction to proton translocation (for every two electrons transferred, four hydrogen ions are translocated across the cytoplasmic membrane), and thus conserves the redox energy in a proton gradient. This subunit may bind ubiquinone. The polypeptide is NADH-quinone oxidoreductase subunit H (Magnetococcus marinus (strain ATCC BAA-1437 / JCM 17883 / MC-1)).